The sequence spans 87 residues: Probable Fe(2+)-trafficking protein (87 aa).

This sequence belongs to the Fe(2+)-trafficking protein family. As to quaternary structure, monomer.

In terms of biological role, could be a mediator in iron transactions between iron acquisition and iron-requiring processes, such as synthesis and/or repair of Fe-S clusters in biosynthetic enzymes. This Buchnera aphidicola subsp. Baizongia pistaciae (strain Bp) protein is Probable Fe(2+)-trafficking protein.